A 1027-amino-acid chain; its full sequence is Exportin-T (1027 aa).

This sequence belongs to the exportin family.

It localises to the nucleus. The protein localises to the cytoplasm. Its function is as follows. tRNA nucleus export receptor which facilitates tRNA translocation across the nuclear pore complex. Involved in pre-tRNA splicing, probably by affecting the interaction of pre-tRNA with splicing endonuclease. In Pyricularia oryzae (strain 70-15 / ATCC MYA-4617 / FGSC 8958) (Rice blast fungus), this protein is Exportin-T (LOS1).